The sequence spans 4171 residues: MSSDSKDQRKTYFLRVASYLLGLNIVEEKLKSTEPLEIFLDSNTNLLVFSRSEQKLELSNKMKSSAPSANVFRVVFYKTQSVPLNNDNFKSVVNVISANGTLNHVFLKSVQNVFGKELTEGNNMQLIAAVNELEESLLATVEMSGGGSLHDEIRSWKGQTGKPANDYNEAFKQLQLLVETMEERSIDELSELVECFEDTCDELWNCGTPYPQNRMKMLIEYGASYLCETITFKIDDSAIWRNDKVADQLRSAIDVCDQMLIIVRLLTAQTWKRNVEHTWEGDAMEMKFLNGFKDRLDEILSLKSLGGQLEELLEERGVREETEKTIETAMRGMAPLAYNPFTEPNWKSRLLVSERSIEGTIDRTLPILKQRLAPANGDSQSIVLSLEKLKSFLCRSNIKEKLQHEREMFLNRLVSMLSQKNQEFNEKSLQVDAKNFQFLTEVAARIVWIRQQTSQMESIRSLSKMMLNNISNYSAFASKLDEFIEKLQYAEKECFDDWCRETVGLIDNKNETINLETTGKIMYLEASNRELNVNYSDRLLRLLKEVRQLISLGFNIPSKIMSCANNGEKYYRFGVILKQIAHFYNTIDQQMIPSQQSLMLEEAIAFEKLVIPRKDASNSASKVTWNDPKQLEEFIVQLQSAEQKLSNRNRRLRNVHMELIEMVEKLMDLNIVKQNNEWKEIILKIRSKMKEEEIVHGAVKNNMKPWLIHWDFQLYKALLIQYEWGIESIQSQLSTISVSLVFADQKIQLRPTIEEIRSKYYKELCRFLRIPDKFRGVQEDENSTKFYAQMIERSMHLLPTVYEKAEQLMMKVETCDAIFVDWLVISQVDLEELIEENLKTAADWESQFKILKGKAREAERLPHELKFECILVSTAGVKSAIEDAIQRLYDALSWTLRHSISTTSQSISTFLSQAIEVLNTVPQSIDEIAEANAKHVIFAENNRRLKEEWKVMEEQLTLLRSVAGTGMEQIDNLEQTWDRFELMLDGHQSMIKDQVEVLKSNVETSVKGMKDEAEKLKARWEQFKPRNDALQGDREEMLKAIQFIKEKRVQWQQLSDGREKIEKECGQFGLEPPKMDIIDEIDEDIKQFEDNWLIYEMFNNELDTMSQEEWIVFRSKTYLFDEFLQKWMEKLKGTGSQTHMSVRLMKDVEHFKEVSSALKFCRGDVLSADHWHEMFRFLGLPRGTTIEKLKFADLLSVSKNIIENTDQLKQLNSRAQGEVAIRDAIQELTLWAAQTEFTLADYKHSNGQNLKIIKEWKESINSLKDSQALLQSLKSSPYYSQFTDKTAVWETRLADLDVFLAQMNEIQRKWIYLEPIFGRGALPSEASRFSRVDSEYRAILNDVSKDARLVSLCSRQSLKKSLEQIVDQLNRCQKALNQFLEQKRTAFPRFYFIGDDDLLEILGQSTNPQVIQTHMKKLFQGINRVQFSSTGETIISMVSSEGETVPLSKAVRIVPQVESWLQELSDEMRRTLKDLTAQAVADAQPSLAKYPSQVLCLAEEVKFSASIENNLNGSSDLNSFKSQLLEKLKAYTNMKVDDKVSDLKLKSLILDLIHHIDVVDQLLTNQAKSINSWTWQRQLRFYLVNGGIVLRQVSSEFEYTYEYQGNYAKLVHTPLTDKCYLTLTQAMYMGLGGNPYGPAGTGKTESVKALAALMGRQVLVFNCDEGIDVTSMGRIFTGIVECGAWGCFDEFNRLDSTVLSAVSMQIQTIQGAIKSRAGSCTFGGKNVQVNPNSAIFVTLNPAGKGYGGRQKMPDNLKQLFRAVVMGKPDNELISSTILYSEGFVDATALARKIVSVFQLSRQMLSKQQHYDWGLRALKVVLGGCGALRRTQTNKNETDLVVQALLLNTLSKLTFSDSERFNSLIDDIFSNVTKEMTKFEELVEPLGVAAQEMGIKLGDKQMEKVFQLYEQMRQRIGVVVVGAAGSGKSTIWKILQRSLILTKKPLKVTQFNPKAVNRSKLLGNMDMDTREWSDGIITMAAREVTKDTSVHHWIVCDGDIDPEWVEALNSVLDDNRLLTMPSGERIQFGSNVNFLFETDSLQFASPATVSRMGMIYISEEDVTPKDIVASWLVKTTEDLHADMPSWIEEHFWRCLKWVRSHKISGITSFAILKNGLTHLKASKTKTQFLVLLFNGFLPTVTPENRQEFAKGVVFQGMSVPDPKNICYDERIDGIMSYTDDVSQNVTKEEVEREDLRPFVQTADTQRYSDIIGSWLQSGNRESFLITGTTGCGKQQLLKHCFQNDPESQLASLYCSAQSSSSHLLQLIQQNCVQASNPTGRVWRPKDRPNMILFLKGINLPAPDKYGTNELLALLQQLLTYQGFFDHNLEWVSIENIQFVGSMNPIGDGAAVSISNRLFSLLRCVSLNTTDSSQLTSIYRTYLTPILEEVGERNSEIIANRMVDIYNKVQSNFRPTDSVVFLFSPRDLTNWVVSLLRHELDQGKLEAVICFEARRIFADRLPTENDKLKFEEILRNVIPISQANETVIFKEKVYVTTGTVVPGESNTGLPLTPINMSDFNQLLAKSINRFAFEIANFNCPLTSQLAFFCACIDRVLTGPGGHLFLPGRPGFGRRDSVRLVAHMHNIQVFSPPVTANFSAKQFDNELKNAITQAVTNNEHVVLILEDHQLRKNIFLQAINSLLASGNVPGLFTQQELDGLVALVSEAANQASFTGALQQFLAHRIRSLVHVVLILEVEANDFKINITENPAILKHCNVIFADRFDRNSLVEIPKIQMESQGITTTDAILTGFNDVLVNLPEHLSIQPIKYRQFVENFFQLLGYKRLTLSVRLERLKGGVSKLNEARDEVAKMQKKAGKKSKLLAEKQAEADEALKAITESMSGAEDQKLSMEQLKAATEKENVRIEEQKAKIDEQLKEVQPLIDEARRAVGSIKSESLSEIRSLRAPPEAVRDILQAVLLFMGILDTSWEAMRKFLSKSGVKDDIMNFDANRITNEIHKKVTALVKQKSNSFEEANAKRASAAAAPLAAWVKANLEYSKILEKIAPLEGEKNKLVKNLKKAEKQMENLSKGLQSVDEVVGELKRKFEVLMKEATQIKVDLDREQDTIRIAGTLVESLSGEFERWKIQIETFGEEQSKMELCSLITSAFITYLGGCSEKDRKSLLKSMCKMFNMPPTFKPLSFASLETEQLNWKTKGLPADQLSLENGSILFTSCHAPLIIDRSGQVSLFLSKFLEKSETFKAAQPDLMTQIELAIRFGKTIIIDDIVEFDSALIPILRKDLSSQGPRQVISFGGKSIDFNPDFKIYFCTRDEKVDIRPNSYVQLNIVNFTTTISALSAQLLDVAIHLEKPELEERSSSLLRDAELKKLELEGLEQLLLQQLASSQGNLLENTALLDSLNKSKESAEIITKSIVESEQLHKELTTQKDIYVPLSLFTSSLFFSFSNLQFHNPMYNYSVNTIMHLFGKTIKSCEDKSSTRVETLARQMQLTVFYHISRGIFRQDRLMFAVAFINATMPKMFQPKEWELFTGVLVDESTDLSALRVQWISPDRLQSLARIRTHLPSLFNNFQIQDDATWNEFSKTLQCENAFPKNVELKMTHFQKVLFIQAVKPERLYNCLMDFVLKTLNIPSINPPAFELKHIFQESESTEPILFILADGADPSQELSEFASSMNVPYHSISMGQGQEIAAYEAIRESASKGEWLCLNNLHLMLQAVPSIFKHLSLTTPHENFRLWLTTEGDARFPSMMLQQSLKITFEPPPGVRNNLLRTYTQIDRSTKNVITCQSIFVLAWLHALLQERRTFIPQGWTKFYEFGASDVRVAKSFVEQLTANKADWEFVRGILKFVIYGGRIENDFDFKVLDSYLNVLFCDEKINGRAGSQLVKGIDLLATTNVQEYIGHISKSVPSVDEPYLFGLPENIKYSWQIVEADRTISSIRTLALGDTKNALSDQSDKISQIVSLWKKLCQSDDLPKRELPTAIRSADPISEVLCLETINALSLIKQLHRSIGHVAKSMKTPSLASPAVQKTIQSLVFQQTPDEWDSMWAGPSDPADYLNVVVKKTRGTLQLFESSKSSSLLSSPIDFSDLFYPNIFLNALRQTTSRQIKIPLDQLILSSAWTPSQLPAKQCVQVQGLLLQGATFDSFLRETTVSSAAYSQAPIVFLAWTSESSSTITGEQIQVPVYSSSERSDLICSVNMPCRGADQWNIAAVALFLR.

Residues 1–1598 (MSSDSKDQRK…VLRQVSSEFE (1598 aa)) form a stem region. 115–122 (GKELTEGN) serves as a coordination point for ATP. 5 coiled-coil regions span residues 164 to 203 (ANDY…CDEL), 629 to 693 (KQLE…KEEE), 829 to 861 (DLEE…AERL), 927 to 1048 (EIAE…KEKR), and 1354 to 1383 (SRQS…LEQK). AAA regions lie at residues 1599–1823 (YTYE…VLGG), 1883–2100 (EPLG…VRSH), 2184–2432 (VTKE…WVVS), and 2527–2767 (RFAF…PIKY). Residues 1637 to 1644 (GPAGTGKT), 1921 to 1928 (GAAGSGKS), 2226 to 2233 (GTTGCGKQ), and 2565 to 2572 (GRPGFGRR) each bind ATP. The segment at 2776 to 3064 (QLLGYKRLTL…VDLDREQDTI (289 aa)) is stalk. 3 coiled-coil regions span residues 2790 to 2877 (ERLK…KEVQ), 2999 to 3059 (EKIA…DLDR), and 3308 to 3336 (ELEE…LLLQ). 2 AAA regions span residues 3140–3367 (ASLE…IITK) and 3575–3784 (LMDF…FVEQ).

The protein belongs to the dynein heavy chain family. In terms of assembly, the cytoplasmic dynein complex 2 is probably composed by a heavy chain che-3 homodimer and a number of light intermediate chains.

It is found in the cell projection. It localises to the cilium membrane. The protein resides in the cytoplasm. Its subcellular location is the cytoskeleton. Functions as a motor for intraflagellar retrograde transport in chemosensory neurons. Functions in cilia biogenesis. This chain is Cytoplasmic dynein 2 heavy chain 1, found in Caenorhabditis elegans.